Reading from the N-terminus, the 441-residue chain is Glutamate--tRNA ligase 1 (441 aa).

The 'HIGH' region signature appears at 9–19 (PSPTGFIHVGN). The 'KMSKS' region signature appears at 239 to 243 (ALSKR). K242 is a binding site for ATP.

It belongs to the class-I aminoacyl-tRNA synthetase family. Glutamate--tRNA ligase type 1 subfamily. In terms of assembly, monomer.

It is found in the cytoplasm. The enzyme catalyses tRNA(Glu) + L-glutamate + ATP = L-glutamyl-tRNA(Glu) + AMP + diphosphate. Catalyzes the attachment of glutamate to tRNA(Glu) in a two-step reaction: glutamate is first activated by ATP to form Glu-AMP and then transferred to the acceptor end of tRNA(Glu). The sequence is that of Glutamate--tRNA ligase 1 from Cereibacter sphaeroides (strain ATCC 17025 / ATH 2.4.3) (Rhodobacter sphaeroides).